A 275-amino-acid chain; its full sequence is Dermonecrotic toxin LamSicTox-alphaIV1i (275 aa).

Residue His5 is part of the active site. Residues Glu25 and Asp27 each coordinate Mg(2+). Catalysis depends on His41, which acts as the Nucleophile. 2 disulfides stabilise this stretch: Cys45–Cys51 and Cys47–Cys192. Asp85 is a binding site for Mg(2+).

Belongs to the arthropod phospholipase D family. Class II subfamily. The cofactor is Mg(2+). Expressed by the venom gland.

The protein localises to the secreted. The enzyme catalyses an N-(acyl)-sphingosylphosphocholine = an N-(acyl)-sphingosyl-1,3-cyclic phosphate + choline. It catalyses the reaction an N-(acyl)-sphingosylphosphoethanolamine = an N-(acyl)-sphingosyl-1,3-cyclic phosphate + ethanolamine. The catalysed reaction is a 1-acyl-sn-glycero-3-phosphocholine = a 1-acyl-sn-glycero-2,3-cyclic phosphate + choline. It carries out the reaction a 1-acyl-sn-glycero-3-phosphoethanolamine = a 1-acyl-sn-glycero-2,3-cyclic phosphate + ethanolamine. Functionally, dermonecrotic toxins cleave the phosphodiester linkage between the phosphate and headgroup of certain phospholipids (sphingolipid and lysolipid substrates), forming an alcohol (often choline) and a cyclic phosphate. This toxin acts on sphingomyelin (SM). It may also act on ceramide phosphoethanolamine (CPE), lysophosphatidylcholine (LPC) and lysophosphatidylethanolamine (LPE), but not on lysophosphatidylserine (LPS), and lysophosphatidylglycerol (LPG). It acts by transphosphatidylation, releasing exclusively cyclic phosphate products as second products. Induces dermonecrosis, hemolysis, increased vascular permeability, edema, inflammatory response, and platelet aggregation. This is Dermonecrotic toxin LamSicTox-alphaIV1i from Loxosceles amazonica (Recluse spider).